The chain runs to 214 residues: Adenylate kinase (214 aa).

10-15 (GAGKGT) is a binding site for ATP. The segment at 30 to 59 (STGDMLRAAIKAGTELGKQAKAVIDAGQLV) is NMP. AMP contacts are provided by residues threonine 31, arginine 36, 57-59 (QLV), 85-88 (GFPR), and glutamine 92. The LID stretch occupies residues 122 to 159 (GRRAHLPSGRTYHVVYNPPKVEGKDDVTGEDLVVRDDD). ATP-binding positions include arginine 123 and 132–133 (TY). Positions 156 and 167 each coordinate AMP. Residue lysine 200 participates in ATP binding.

Belongs to the adenylate kinase family. Monomer.

The protein localises to the cytoplasm. It carries out the reaction AMP + ATP = 2 ADP. It participates in purine metabolism; AMP biosynthesis via salvage pathway; AMP from ADP: step 1/1. Its function is as follows. Catalyzes the reversible transfer of the terminal phosphate group between ATP and AMP. Plays an important role in cellular energy homeostasis and in adenine nucleotide metabolism. The polypeptide is Adenylate kinase (Vibrio vulnificus (strain YJ016)).